Here is a 506-residue protein sequence, read N- to C-terminus: WD repeat-containing protein 55 homolog (506 aa).

The segment covering 1–11 has biased composition (basic and acidic residues); that stretch reads MHRHDCFKTPA. 3 disordered regions span residues 1–20, 33–87, and 100–132; these read MHRH…DDID, QEVL…SDDS, and AKRR…DEDD. Residues 33–48 show a composition bias toward acidic residues; that stretch reads QEVLNESESDDDEYDL. Residues 61–74 are compositionally biased toward low complexity; that stretch reads GNISSNESISSDGS. Acidic residues predominate over residues 78–87; it reads NAEDTDSDDS. 6 WD repeats span residues 156–195, 200–239, 243–281, 284–323, 326–365, and 410–449; these read RLED…NKLL, VHAK…LKKL, AHDD…AIFE, EVED…LYVQ, PYEE…YHCD, and QHNM…DFGD. Residues 480–506 form a disordered region; it reads DMTKEQDDDDNDDGGNNTTAAGSNNVT. Residues 493-506 are compositionally biased toward low complexity; it reads GGNNTTAAGSNNVT.

The protein belongs to the WD repeat WDR55 family.

The polypeptide is WD repeat-containing protein 55 homolog (Drosophila mojavensis (Fruit fly)).